We begin with the raw amino-acid sequence, 281 residues long: Pantothenate synthetase (281 aa).

An ATP-binding site is contributed by 31-38 (MGALHDGH). The active-site Proton donor is the histidine 38. Glutamine 62 contributes to the (R)-pantoate binding site. Glutamine 62 provides a ligand contact to beta-alanine. An ATP-binding site is contributed by 148–151 (GQKD). Glutamine 154 is a (R)-pantoate binding site. ATP is bound by residues valine 177 and 185–188 (LSSR).

Belongs to the pantothenate synthetase family. As to quaternary structure, homodimer.

The protein resides in the cytoplasm. The enzyme catalyses (R)-pantoate + beta-alanine + ATP = (R)-pantothenate + AMP + diphosphate + H(+). It functions in the pathway cofactor biosynthesis; (R)-pantothenate biosynthesis; (R)-pantothenate from (R)-pantoate and beta-alanine: step 1/1. Catalyzes the condensation of pantoate with beta-alanine in an ATP-dependent reaction via a pantoyl-adenylate intermediate. The protein is Pantothenate synthetase of Dinoroseobacter shibae (strain DSM 16493 / NCIMB 14021 / DFL 12).